The sequence spans 605 residues: UvrABC system protein C (605 aa).

A GIY-YIG domain is found at 13-92 (TSPGVYLMKD…IKKHHPKYNV (80 aa)). The UVR domain occupies 205–240 (SEIIQDLEKSIEKASQEQKFEQAGIYYRTLKLIQQA).

Belongs to the UvrC family. Interacts with UvrB in an incision complex.

The protein localises to the cytoplasm. The UvrABC repair system catalyzes the recognition and processing of DNA lesions. UvrC both incises the 5' and 3' sides of the lesion. The N-terminal half is responsible for the 3' incision and the C-terminal half is responsible for the 5' incision. The polypeptide is UvrABC system protein C (Chlamydia caviae (strain ATCC VR-813 / DSM 19441 / 03DC25 / GPIC) (Chlamydophila caviae)).